Here is a 1054-residue protein sequence, read N- to C-terminus: SMC5-SMC6 complex localization factor protein 1 (1054 aa).

2 BRCT domains span residues 2-80 (EDSA…AKSG) and 121-199 (PGAF…LLEK). Residues 283–303 (RHGLENQKETKKKDKNIQRSY) form a disordered region. The span at 284 to 299 (HGLENQKETKKKDKNI) shows a compositional bias: basic and acidic residues. Residues 407–1054 (PRGILNLIEN…MMCQSITELS (648 aa)) form an NSE5-like domain; mediates interaction with SLF2 region. ANK repeat units lie at residues 802–832 (KGET…DINV), 836–865 (AGWT…EVDL), and 870–900 (DGVT…ELLQ).

Interacts (via BRCT domains) with RAD18 (via C-terminus and phosphorylated form); this interaction is required for efficient repair of UV-induced DNA damage. Interacts (via N-terminus) with SLF2; this interaction links RAD18 to the SMC5-SMC6 complex. Interacts (via BRCT domains) with RAD18; this interaction occurs in a SLF2-independent manner. Interacts with SMC6. In terms of tissue distribution, widely expressed. Expressed in testis. Expressed in spermatocytes.

The protein resides in the nucleus. Its subcellular location is the cytoplasm. The protein localises to the cytoskeleton. It localises to the microtubule organizing center. It is found in the centrosome. In terms of biological role, plays a role in the DNA damage response (DDR) pathway by regulating postreplication repair of UV-damaged DNA and genomic stability maintenance. The SLF1-SLF2 complex acts to link RAD18 with the SMC5-SMC6 complex at replication-coupled interstrand cross-links (ICL) and DNA double-strand breaks (DSBs) sites on chromatin during DNA repair in response to stalled replication forks. Promotes the recruitment of SLF2 and the SMC5-SMC6 complex to DNA lesions. The chain is SMC5-SMC6 complex localization factor protein 1 from Mus musculus (Mouse).